Reading from the N-terminus, the 553-residue chain is ATP synthase subunit alpha (553 aa).

173–180 provides a ligand contact to ATP; the sequence is GDRQTGKT. Residues 527–553 form a disordered region; sequence EALDPSAVEREEIAVHHRKPSDETAGH. The segment covering 533–553 has biased composition (basic and acidic residues); the sequence is AVEREEIAVHHRKPSDETAGH.

The protein belongs to the ATPase alpha/beta chains family. F-type ATPases have 2 components, CF(1) - the catalytic core - and CF(0) - the membrane proton channel. CF(1) has five subunits: alpha(3), beta(3), gamma(1), delta(1), epsilon(1). CF(0) has three main subunits: a(1), b(2) and c(9-12). The alpha and beta chains form an alternating ring which encloses part of the gamma chain. CF(1) is attached to CF(0) by a central stalk formed by the gamma and epsilon chains, while a peripheral stalk is formed by the delta and b chains.

It is found in the cell membrane. It carries out the reaction ATP + H2O + 4 H(+)(in) = ADP + phosphate + 5 H(+)(out). Produces ATP from ADP in the presence of a proton gradient across the membrane. The alpha chain is a regulatory subunit. This chain is ATP synthase subunit alpha, found in Parafrankia sp. (strain EAN1pec).